The primary structure comprises 179 residues: Large ribosomal subunit protein uL5 (179 aa).

It belongs to the universal ribosomal protein uL5 family. As to quaternary structure, part of the 50S ribosomal subunit; part of the 5S rRNA/L5/L18/L25 subcomplex. Contacts the 5S rRNA and the P site tRNA. Forms a bridge to the 30S subunit in the 70S ribosome.

Its function is as follows. This is one of the proteins that bind and probably mediate the attachment of the 5S RNA into the large ribosomal subunit, where it forms part of the central protuberance. In the 70S ribosome it contacts protein S13 of the 30S subunit (bridge B1b), connecting the 2 subunits; this bridge is implicated in subunit movement. Contacts the P site tRNA; the 5S rRNA and some of its associated proteins might help stabilize positioning of ribosome-bound tRNAs. This chain is Large ribosomal subunit protein uL5, found in Geobacillus kaustophilus (strain HTA426).